A 407-amino-acid chain; its full sequence is Cathepsin D (407 aa).

Positions Met1 to Ala20 are cleaved as a signal peptide. The propeptide at Leu21–Lys64 is activation peptide. Positions Tyr79–Ala402 constitute a Peptidase A1 domain. Cystine bridges form between Cys91–Cys160 and Cys110–Cys117. Asp97 is an active-site residue. N-linked (GlcNAc...) asparagine glycosylation is found at Asn134 and Asn258. Residues Cys281 and Cys285 are joined by a disulfide bond. Asp290 is an active-site residue. A disulfide bridge connects residues Cys324 and Cys361.

Belongs to the peptidase A1 family. As to quaternary structure, occurs as a mixture of both a single chain form and two types of two chain (light and heavy) forms. Interacts with ADAM30; this leads to activation of CTSD. N- and O-glycosylated. In terms of processing, undergoes proteolytic cleavage and activation by ADAM30.

It localises to the lysosome. The protein localises to the melanosome. Its subcellular location is the secreted. The protein resides in the extracellular space. It carries out the reaction Specificity similar to, but narrower than, that of pepsin A. Does not cleave the 4-Gln-|-His-5 bond in B chain of insulin.. In terms of biological role, acid protease active in intracellular protein breakdown. Plays a role in APP processing following cleavage and activation by ADAM30 which leads to APP degradation. This Rattus norvegicus (Rat) protein is Cathepsin D (Ctsd).